Here is a 51-residue protein sequence, read N- to C-terminus: Large ribosomal subunit protein bL33 (51 aa).

Belongs to the bacterial ribosomal protein bL33 family.

The protein is Large ribosomal subunit protein bL33 of Ruthia magnifica subsp. Calyptogena magnifica.